The chain runs to 350 residues: Histidinol-phosphate aminotransferase 1 (350 aa).

Position 210 is an N6-(pyridoxal phosphate)lysine (lysine 210).

The protein belongs to the class-II pyridoxal-phosphate-dependent aminotransferase family. Histidinol-phosphate aminotransferase subfamily. As to quaternary structure, homodimer. Pyridoxal 5'-phosphate is required as a cofactor.

It carries out the reaction L-histidinol phosphate + 2-oxoglutarate = 3-(imidazol-4-yl)-2-oxopropyl phosphate + L-glutamate. The protein operates within amino-acid biosynthesis; L-histidine biosynthesis; L-histidine from 5-phospho-alpha-D-ribose 1-diphosphate: step 7/9. The sequence is that of Histidinol-phosphate aminotransferase 1 from Pseudomonas fluorescens (strain Pf0-1).